The sequence spans 58 residues: Photosystem II reaction center protein K (58 aa).

Residues 1–21 constitute a propeptide that is removed on maturation; the sequence is MLNMISTFFDSSSNFSEAFLA. A helical membrane pass occupies residues 29–49; that stretch reads IFDPIVDVMPIIPVFFLLLAF.

It belongs to the PsbK family. In terms of assembly, PSII is composed of 1 copy each of membrane proteins PsbA, PsbB, PsbC, PsbD, PsbE, PsbF, PsbH, PsbI, PsbJ, PsbK, PsbL, PsbM, PsbT, PsbX, PsbY, PsbZ, Psb30/Ycf12, at least 3 peripheral proteins of the oxygen-evolving complex and a large number of cofactors. It forms dimeric complexes.

The protein localises to the plastid. Its subcellular location is the chloroplast thylakoid membrane. Functionally, one of the components of the core complex of photosystem II (PSII). PSII is a light-driven water:plastoquinone oxidoreductase that uses light energy to abstract electrons from H(2)O, generating O(2) and a proton gradient subsequently used for ATP formation. It consists of a core antenna complex that captures photons, and an electron transfer chain that converts photonic excitation into a charge separation. The protein is Photosystem II reaction center protein K of Chaetosphaeridium globosum (Charophycean green alga).